The sequence spans 151 residues: Ribosome maturation factor RimP (151 aa).

It belongs to the RimP family.

It is found in the cytoplasm. In terms of biological role, required for maturation of 30S ribosomal subunits. This is Ribosome maturation factor RimP from Shewanella putrefaciens (strain CN-32 / ATCC BAA-453).